The sequence spans 322 residues: Mitochondrial uncoupling protein 4 (322 aa).

3 Solcar repeats span residues 20 to 114, 124 to 216, and 225 to 316; these read SKFL…LREV, YPLW…VKHY, and DNIS…IREM. Transmembrane regions (helical) follow at residues 22–39, 87–108, 126–143, 194–211, 228–247, and 287–310; these read FLLSGCAATVAELATFPL, WQGVTPAIYRHVVYSGGRMVTY, LWKSVIGGMMAGVIGQFL, PNIQRAALVNMGDLTTYD, STHGLSSLCSGLVASILGTP, and SLYKGFLPSWLRMTPWSMVFWLTY.

This sequence belongs to the mitochondrial carrier (TC 2.A.29) family. In terms of assembly, homotetramer.

It localises to the mitochondrion inner membrane. It is found in the cell projection. The protein resides in the neuron projection. The catalysed reaction is H(+)(in) = H(+)(out). The enzyme catalyses chloride(in) = chloride(out). Its function is as follows. Facilitates proton transport across the inner mitochondrial membrane and may dissipate excessive proton gradient associated with oxidative and metabolic stress at neuronal synapses. Regulates glutamate-induced proton conductance in astrocytes, shifting the energy metabolism toward aerobic glycolysis and lactate transfer to neurons for ATP synthesis. Can transport chloride ions with lower efficiency. The transport mechanism remains to be elucidated. This chain is Mitochondrial uncoupling protein 4, found in Mus musculus (Mouse).